The following is a 292-amino-acid chain: UPF0749 protein Mb1856 (292 aa).

A signal peptide spans 1–28 (MSENRPEPVAAETSAATTARHSQADAGA). Residues 1 to 30 (MSENRPEPVAAETSAATTARHSQADAGAHD) are disordered. 3 consecutive transmembrane segments (helical) span residues 68 to 88 (VFGT…VTQV), 152 to 172 (AALS…MITI), and 229 to 249 (VLSP…AAAM).

It belongs to the UPF0749 family.

It localises to the cell membrane. This chain is UPF0749 protein Mb1856, found in Mycobacterium bovis (strain ATCC BAA-935 / AF2122/97).